We begin with the raw amino-acid sequence, 150 residues long: Peptide deformylase (150 aa).

Residues C88 and H130 each coordinate Fe cation. The active site involves E131. H134 provides a ligand contact to Fe cation.

It belongs to the polypeptide deformylase family. Fe(2+) serves as cofactor.

It catalyses the reaction N-terminal N-formyl-L-methionyl-[peptide] + H2O = N-terminal L-methionyl-[peptide] + formate. In terms of biological role, removes the formyl group from the N-terminal Met of newly synthesized proteins. Requires at least a dipeptide for an efficient rate of reaction. N-terminal L-methionine is a prerequisite for activity but the enzyme has broad specificity at other positions. In Desulfitobacterium hafniense (strain Y51), this protein is Peptide deformylase.